The following is a 545-amino-acid chain: DNA mismatch repair protein MutL (545 aa).

The segment at 517-545 (RRSGARGGGEARPRPQEESFPEAPLPREP) is disordered.

Belongs to the DNA mismatch repair MutL/HexB family.

This protein is involved in the repair of mismatches in DNA. It is required for dam-dependent methyl-directed DNA mismatch repair. May act as a 'molecular matchmaker', a protein that promotes the formation of a stable complex between two or more DNA-binding proteins in an ATP-dependent manner without itself being part of a final effector complex. In Thermus thermophilus (strain ATCC 27634 / DSM 579 / HB8), this protein is DNA mismatch repair protein MutL.